Consider the following 338-residue polypeptide: Fructose-1,6-bisphosphatase class 1 (338 aa).

Residues E91, D113, L115, and D116 each contribute to the Mg(2+) site. Substrate is bound by residues 116–119 (DGSS), N208, and K274. E280 is a Mg(2+) binding site.

Belongs to the FBPase class 1 family. In terms of assembly, homotetramer. Requires Mg(2+) as cofactor.

It localises to the cytoplasm. The enzyme catalyses beta-D-fructose 1,6-bisphosphate + H2O = beta-D-fructose 6-phosphate + phosphate. It participates in carbohydrate biosynthesis; gluconeogenesis. This chain is Fructose-1,6-bisphosphatase class 1, found in Ralstonia nicotianae (strain ATCC BAA-1114 / GMI1000) (Ralstonia solanacearum).